Here is an 840-residue protein sequence, read N- to C-terminus: 9-beta-pimara-7,15-diene synthase, chloroplastic (840 aa).

The N-terminal 56 residues, 1–56, are a transit peptide targeting the chloroplast; that stretch reads MASPMEAVARSSLVLAPRRRRALGLLPAAAAPFVLDCRRRHNGGMRRPHVSFACSA. 5 residues coordinate Mg(2+): Asp-589, Asp-593, Asn-733, Ser-737, and Glu-741. A DDXXD motif motif is present at residues 589–593; the sequence is DDFFD.

It belongs to the terpene synthase family. The cofactor is Mg(2+).

The protein resides in the plastid. The protein localises to the chloroplast. It carries out the reaction 9alpha-copalyl diphosphate = 9beta-pimara-7,15-diene + diphosphate. Functionally, involved in the biosynthesis of momilactone A and B phytoalexins. Catalyzes the conversion of syn-copalyl diphosphate to the phytoalexin precursor syn-pimara-7,15-diene. This Oryza sativa subsp. indica (Rice) protein is 9-beta-pimara-7,15-diene synthase, chloroplastic.